The sequence spans 231 residues: Large ribosomal subunit protein uL1 (231 aa).

This sequence belongs to the universal ribosomal protein uL1 family. Part of the 50S ribosomal subunit.

Binds directly to 23S rRNA. The L1 stalk is quite mobile in the ribosome, and is involved in E site tRNA release. Functionally, protein L1 is also a translational repressor protein, it controls the translation of the L11 operon by binding to its mRNA. This is Large ribosomal subunit protein uL1 from Beijerinckia indica subsp. indica (strain ATCC 9039 / DSM 1715 / NCIMB 8712).